A 656-amino-acid polypeptide reads, in one-letter code: tRNA 5-methylaminomethyl-2-thiouridine biosynthesis bifunctional protein MnmC (656 aa).

The tRNA (mnm(5)s(2)U34)-methyltransferase stretch occupies residues 1–236 (MTDPLIPAVL…KRAMLVGHFA (236 aa)). Positions 260–656 (IGAGLAGCAV…LRALRQGAVS (397 aa)) are FAD-dependent cmnm(5)s(2)U34 oxidoreductase.

It in the N-terminal section; belongs to the methyltransferase superfamily. tRNA (mnm(5)s(2)U34)-methyltransferase family. In the C-terminal section; belongs to the DAO family. FAD serves as cofactor.

It localises to the cytoplasm. The catalysed reaction is 5-aminomethyl-2-thiouridine(34) in tRNA + S-adenosyl-L-methionine = 5-methylaminomethyl-2-thiouridine(34) in tRNA + S-adenosyl-L-homocysteine + H(+). Catalyzes the last two steps in the biosynthesis of 5-methylaminomethyl-2-thiouridine (mnm(5)s(2)U) at the wobble position (U34) in tRNA. Catalyzes the FAD-dependent demodification of cmnm(5)s(2)U34 to nm(5)s(2)U34, followed by the transfer of a methyl group from S-adenosyl-L-methionine to nm(5)s(2)U34, to form mnm(5)s(2)U34. The polypeptide is tRNA 5-methylaminomethyl-2-thiouridine biosynthesis bifunctional protein MnmC (Paraburkholderia phytofirmans (strain DSM 17436 / LMG 22146 / PsJN) (Burkholderia phytofirmans)).